A 204-amino-acid chain; its full sequence is Ribosome maturation factor RimM (204 aa).

Residues 117–192 (DEDEFFSADL…EVTIDPPDDL (76 aa)) form the PRC barrel domain.

The protein belongs to the RimM family. In terms of assembly, binds ribosomal protein uS19.

The protein resides in the cytoplasm. In terms of biological role, an accessory protein needed during the final step in the assembly of 30S ribosomal subunit, possibly for assembly of the head region. Essential for efficient processing of 16S rRNA. May be needed both before and after RbfA during the maturation of 16S rRNA. It has affinity for free ribosomal 30S subunits but not for 70S ribosomes. In Methylobacterium nodulans (strain LMG 21967 / CNCM I-2342 / ORS 2060), this protein is Ribosome maturation factor RimM.